The primary structure comprises 194 residues: Large ribosomal subunit protein bL12m (194 aa).

A mitochondrion-targeting transit peptide spans 1 to 33; that stretch reads MSLRILAKRSSSIWMKTRVTPALISPITITTRF. N-linked (GlcNAc...) asparagine glycosylation is present at N34. Positions 101-120 are disordered; sequence AGNVPSSTGEAGSGAEEEAK. Residues 105 to 114 show a composition bias toward low complexity; that stretch reads PSSTGEAGSG.

It belongs to the bacterial ribosomal protein bL12 family. In terms of assembly, component of the mitochondrial large ribosomal subunit (mt-LSU). Mature yeast 74S mitochondrial ribosomes consist of a small (37S) and a large (54S) subunit. The 37S small subunit contains a 15S ribosomal RNA (15S mt-rRNA) and 34 different proteins. The 54S large subunit contains a 21S rRNA (21S mt-rRNA) and 46 different proteins. N-glycosylated.

Its subcellular location is the mitochondrion. Functionally, component of the mitochondrial ribosome (mitoribosome), a dedicated translation machinery responsible for the synthesis of mitochondrial genome-encoded proteins, including at least some of the essential transmembrane subunits of the mitochondrial respiratory chain. The mitoribosomes are attached to the mitochondrial inner membrane and translation products are cotranslationally integrated into the membrane. The protein is Large ribosomal subunit protein bL12m (MNP1) of Saccharomyces cerevisiae (strain ATCC 204508 / S288c) (Baker's yeast).